The following is a 145-amino-acid chain: Large ribosomal subunit protein uL11 (145 aa).

Belongs to the universal ribosomal protein uL11 family. As to quaternary structure, part of the ribosomal stalk of the 50S ribosomal subunit. Interacts with L10 and the large rRNA to form the base of the stalk. L10 forms an elongated spine to which L12 dimers bind in a sequential fashion forming a multimeric L10(L12)X complex. In terms of processing, one or more lysine residues are methylated.

Its function is as follows. Forms part of the ribosomal stalk which helps the ribosome interact with GTP-bound translation factors. The chain is Large ribosomal subunit protein uL11 from Coxiella burnetii (strain CbuK_Q154) (Coxiella burnetii (strain Q154)).